A 569-amino-acid chain; its full sequence is Cryptochrome DASH, chloroplastic/mitochondrial (569 aa).

A Photolyase/cryptochrome alpha/beta domain is found at 84–221; it reads GVTILWFRND…KLELIWGSTM (138 aa). Residues Tyr-316 and 329 to 333 contribute to the FAD site; that span reads STKFS. Residue Arg-436 participates in ATP binding. Residues Asp-466 and Asp-468 each coordinate FAD. Asp-485 contributes to the ATP binding site. Positions 541–569 are disordered; that stretch reads GNGPMAGGSKSGGGFRGSHSGRRSRHNGP. Over residues 544 to 556 the composition is skewed to gly residues; it reads PMAGGSKSGGGFR. Residues 559–569 are compositionally biased toward basic residues; that stretch reads HSGRRSRHNGP.

It belongs to the DNA photolyase class-1 family. Homodimer. Requires FAD as cofactor. (6R)-5,10-methylene-5,6,7,8-tetrahydrofolate is required as a cofactor.

It localises to the plastid. It is found in the chloroplast. The protein resides in the mitochondrion. May have a photoreceptor function. Binds ss- and ds-DNA in a sequence non-specific manner. Has a photolyase activity specific for cyclobutane pyrimidine dimers in ssDNA. The chain is Cryptochrome DASH, chloroplastic/mitochondrial (CRYD) from Arabidopsis thaliana (Mouse-ear cress).